Reading from the N-terminus, the 361-residue chain is Queuine tRNA-ribosyltransferase (361 aa).

The active-site Proton acceptor is the D92. Residues 92 to 96, D146, Q189, and G216 each bind substrate; that span reads DSGGF. The interval 247 to 253 is RNA binding; the sequence is GVGKPAD. D266 functions as the Nucleophile in the catalytic mechanism. The segment at 271–275 is RNA binding; important for wobble base 34 recognition; sequence TRSGR. Residues C304, C306, C309, and H335 each contribute to the Zn(2+) site.

It belongs to the queuine tRNA-ribosyltransferase family. In terms of assembly, homodimer. Within each dimer, one monomer is responsible for RNA recognition and catalysis, while the other monomer binds to the replacement base PreQ1. Requires Zn(2+) as cofactor.

The catalysed reaction is 7-aminomethyl-7-carbaguanine + guanosine(34) in tRNA = 7-aminomethyl-7-carbaguanosine(34) in tRNA + guanine. It participates in tRNA modification; tRNA-queuosine biosynthesis. Its function is as follows. Catalyzes the base-exchange of a guanine (G) residue with the queuine precursor 7-aminomethyl-7-deazaguanine (PreQ1) at position 34 (anticodon wobble position) in tRNAs with GU(N) anticodons (tRNA-Asp, -Asn, -His and -Tyr). Catalysis occurs through a double-displacement mechanism. The nucleophile active site attacks the C1' of nucleotide 34 to detach the guanine base from the RNA, forming a covalent enzyme-RNA intermediate. The proton acceptor active site deprotonates the incoming PreQ1, allowing a nucleophilic attack on the C1' of the ribose to form the product. After dissociation, two additional enzymatic reactions on the tRNA convert PreQ1 to queuine (Q), resulting in the hypermodified nucleoside queuosine (7-(((4,5-cis-dihydroxy-2-cyclopenten-1-yl)amino)methyl)-7-deazaguanosine). This chain is Queuine tRNA-ribosyltransferase, found in Rickettsia peacockii (strain Rustic).